A 931-amino-acid chain; its full sequence is MSSANSIKVVARFRPQNKVELESGGKPIVSFDGEDTCTVASKEAQGSFTFDRVFDMGCKQQDIFDFSIRSTVDDILNGYNGTVFAYGQTGAGKSYTMMGTNIDDDEGRGIIPRIVEQIFASIMSSPGTIEYTVRVSYMEIYMERIRDLLAPQNDNLPVHEEKNRGVYVKGLLEIYVSSVQEVYEVMRRGGNARAVAATNMNQESSRSHSIFVITITQKNVETGSAKSGQLFLVDLAGSEKVGKTGASGQTLEEAKKINKSLSALGMVINALTDGKSSHIPYRDSKLTRILQESLGGNSRTTLIINCSPSSYNDAETLGTLRFGMRAKSIKNKAKVNAELSPAELKSLLKKAQGQVTNFESYISSLEGEIQMWRAGEAVPKERWATPLTTDAVARTKADARTSTRPSTPSLISDSRSETPAISDRAGTPSLPLDKDEREEFLRRENELQDQISEKESQAASAEKQLRETKEELAYLKDHDSKVGKENEKLTTEVNEFKMQLERLTFESKEAQITMDALKEANSELTTELDEVKQQLLDVKMSAKESGAALDEKEKRKAEKMAKMMAGFDLGGEVFSENERHIAETIEKVDSLHELSATGDNIAPDEFKALKARLVETQGIVRQAELSMYSTSSSESDSRRRQELEARLEAVQAEYEEILTRNLGPEDIEEVKARLENAFANRQTAQSQFVEELKEDIAQKAAENTRMKTLIEDLQQRVKAGATAPMANGKTIQQQIAEFDVMKKSLMRDLQNRCERVVELEISLDETREQYNNVLRSSNNRAQQKKMAFLERNLEQLTQVQRQLVEQNSALKKEVAIAERKLIARNERIQSLESLLQDSQEKMAAANHKYVQLAAVKERLELAKAGSTRGLNSPGGFSFANAGSRIAKPLRGGGGGNDAPSIPTIQNLQGQNEGNTSSGSSSKRASWFFTKS.

In terms of domain architecture, Kinesin motor spans 6–329 (SIKVVARFRP…LRFGMRAKSI (324 aa)). ATP contacts are provided by residues 87 to 94 (GQTGAGKS) and 237 to 244 (GSEKVGKT). Residues 342-864 (AELKSLLKKA…VKERLELAKA (523 aa)) are a coiled coil. 2 disordered regions span residues 388 to 465 (TTDA…EKQL) and 886 to 931 (AKPL…FTKS). The span at 402-419 (STRPSTPSLISDSRSETP) shows a compositional bias: polar residues. Residues 432–456 (LDKDEREEFLRRENELQDQISEKES) are compositionally biased toward basic and acidic residues. A compositionally biased stretch (polar residues) spans 902 to 931 (PTIQNLQGQNEGNTSSGSSSKRASWFFTKS).

Belongs to the TRAFAC class myosin-kinesin ATPase superfamily. Kinesin family. Kinesin subfamily.

It localises to the cytoplasm. The protein resides in the cytoskeleton. In terms of biological role, kinesin is a microtubule-associated force-producing protein that may play a role in organelle transport. Its motor activity is directed toward the microtubule's plus end. The sequence is that of Kinesin heavy chain (KLP1) from Gibberella moniliformis (Maize ear and stalk rot fungus).